Here is a 307-residue protein sequence, read N- to C-terminus: Ribonuclease Z (307 aa).

Zn(2+)-binding residues include His-61, His-63, Asp-65, His-66, His-138, Asp-207, and His-265. Asp-65 (proton acceptor) is an active-site residue.

It belongs to the RNase Z family. Homodimer. It depends on Zn(2+) as a cofactor.

The enzyme catalyses Endonucleolytic cleavage of RNA, removing extra 3' nucleotides from tRNA precursor, generating 3' termini of tRNAs. A 3'-hydroxy group is left at the tRNA terminus and a 5'-phosphoryl group is left at the trailer molecule.. In terms of biological role, zinc phosphodiesterase, which displays some tRNA 3'-processing endonuclease activity. Probably involved in tRNA maturation, by removing a 3'-trailer from precursor tRNA. The polypeptide is Ribonuclease Z (Methanothermobacter thermautotrophicus (strain ATCC 29096 / DSM 1053 / JCM 10044 / NBRC 100330 / Delta H) (Methanobacterium thermoautotrophicum)).